Consider the following 161-residue polypeptide: S-ribosylhomocysteine lyase (161 aa).

Fe cation contacts are provided by H53, H57, and C124.

It belongs to the LuxS family. As to quaternary structure, homodimer. Fe cation serves as cofactor.

The catalysed reaction is S-(5-deoxy-D-ribos-5-yl)-L-homocysteine = (S)-4,5-dihydroxypentane-2,3-dione + L-homocysteine. In terms of biological role, involved in the synthesis of autoinducer 2 (AI-2) which is secreted by bacteria and is used to communicate both the cell density and the metabolic potential of the environment. The regulation of gene expression in response to changes in cell density is called quorum sensing. Catalyzes the transformation of S-ribosylhomocysteine (RHC) to homocysteine (HC) and 4,5-dihydroxy-2,3-pentadione (DPD). This Phocaeicola vulgatus (strain ATCC 8482 / DSM 1447 / JCM 5826 / CCUG 4940 / NBRC 14291 / NCTC 11154) (Bacteroides vulgatus) protein is S-ribosylhomocysteine lyase.